The chain runs to 570 residues: Aspartyl aminopeptidase (570 aa).

Residue H86 participates in Zn(2+) binding. Substrate is bound at residue H160. Zn(2+) is bound at residue D324. Residue E379 coordinates substrate. Zn(2+) is bound by residues E380 and D434. Substrate is bound by residues D434, H437, K462, and Y469. H534 provides a ligand contact to Zn(2+).

The protein belongs to the peptidase M18 family. As to quaternary structure, homododecamer composed of homodimers and homotrimers that assemble into a tetrahedron shape to create a central tunnel containing the active sites. Homooctamer. Requires Zn(2+) as cofactor.

It is found in the cytoplasm. It carries out the reaction Release of an N-terminal aspartate or glutamate from a peptide, with a preference for aspartate.. Activated by Co(2+). Inhibited by high concentrations (&gt;1mM) of Zn(2+). Aminopeptidase which specifically catalyzes the removal of glutamic acid or aspartic acid residues from the N-terminus of peptides. May play a role in the final step of host hemoglobin catabolism, by cleaving hemoglobin-derived oligopeptides in the cytoplasm. This Plasmodium falciparum (isolate 3D7) protein is Aspartyl aminopeptidase.